The chain runs to 629 residues: tRNA uridine 5-carboxymethylaminomethyl modification enzyme MnmG (629 aa).

FAD-binding positions include 13–18, V125, and S180; that span reads GGGHAG. 273–287 serves as a coordination point for NAD(+); that stretch reads GPRYCPSIEDKVMRF. Q370 is an FAD binding site.

This sequence belongs to the MnmG family. In terms of assembly, homodimer. Heterotetramer of two MnmE and two MnmG subunits. Requires FAD as cofactor.

The protein resides in the cytoplasm. In terms of biological role, NAD-binding protein involved in the addition of a carboxymethylaminomethyl (cmnm) group at the wobble position (U34) of certain tRNAs, forming tRNA-cmnm(5)s(2)U34. This Salmonella arizonae (strain ATCC BAA-731 / CDC346-86 / RSK2980) protein is tRNA uridine 5-carboxymethylaminomethyl modification enzyme MnmG.